The sequence spans 78 residues: U-scoloptoxin(15)-Ssm2a (78 aa).

The first 23 residues, 1–23, serve as a signal peptide directing secretion; sequence MEKKIIFLCFFVSLLTLPEFISS. The segment at 34–37 is important for inhibition of KCNQ4; that stretch reads PEKK. 2 disulfide bridges follow: cysteine 44–cysteine 70 and cysteine 48–cysteine 72.

The protein belongs to the SLPTX(15) family. As to expression, expressed by the venom gland.

Its subcellular location is the secreted. The chain is U-scoloptoxin(15)-Ssm2a from Scolopendra mutilans (Chinese red-headed centipede).